Reading from the N-terminus, the 297-residue chain is Acetyl-coenzyme A carboxylase carboxyl transferase subunit beta (297 aa).

Residues 1-23 (MSWIERILGRTSSSSSSSKSKVP) are disordered. A CoA carboxyltransferase N-terminal domain is found at 26 to 295 (VWTKCTSCEQ…PFKTAELIVE (270 aa)). Zn(2+) is bound by residues Cys30, Cys33, Cys49, and Cys52. Residues 30 to 52 (CTSCEQVLYSEELKRNMHVCPKC) form a C4-type zinc finger.

It belongs to the AccD/PCCB family. Acetyl-CoA carboxylase is a heterohexamer composed of biotin carboxyl carrier protein (AccB), biotin carboxylase (AccC) and two subunits each of ACCase subunit alpha (AccA) and ACCase subunit beta (AccD). The cofactor is Zn(2+).

It is found in the cytoplasm. It carries out the reaction N(6)-carboxybiotinyl-L-lysyl-[protein] + acetyl-CoA = N(6)-biotinyl-L-lysyl-[protein] + malonyl-CoA. Its pathway is lipid metabolism; malonyl-CoA biosynthesis; malonyl-CoA from acetyl-CoA: step 1/1. In terms of biological role, component of the acetyl coenzyme A carboxylase (ACC) complex. Biotin carboxylase (BC) catalyzes the carboxylation of biotin on its carrier protein (BCCP) and then the CO(2) group is transferred by the transcarboxylase to acetyl-CoA to form malonyl-CoA. The polypeptide is Acetyl-coenzyme A carboxylase carboxyl transferase subunit beta (Actinobacillus pleuropneumoniae serotype 5b (strain L20)).